A 328-amino-acid polypeptide reads, in one-letter code: 4-hydroxy-2-oxoglutarate aldolase, mitochondrial (328 aa).

Residues 1 to 26 (MFGRTLFPARVIALGSGLFRTPLRTL) constitute a mitochondrion transit peptide. 76-77 (SN) lines the substrate pocket. The Schiff-base intermediate with substrate role is filled by Lys-195. Residues Ser-197 and Gly-221 each coordinate substrate.

The protein belongs to the DapA family. In terms of assembly, homotetramer.

The protein localises to the mitochondrion. It catalyses the reaction (4S)-4-hydroxy-2-oxoglutarate = glyoxylate + pyruvate. The enzyme catalyses (4R)-4-hydroxy-2-oxoglutarate = glyoxylate + pyruvate. With respect to regulation, inhibited by divalent cations. Its function is as follows. Catalyzes the final step in the metabolic pathway of hydroxyproline. In Xenopus tropicalis (Western clawed frog), this protein is 4-hydroxy-2-oxoglutarate aldolase, mitochondrial (hoga1).